We begin with the raw amino-acid sequence, 197 residues long: uncharacterized protein (197 aa).

This is an uncharacterized protein from Orgyia pseudotsugata multicapsid polyhedrosis virus (OpMNPV).